The chain runs to 256 residues: C-8 sterol isomerase (256 aa).

The tract at residues 1–31 (MPPKKQSSSGGNKPSGSGSSSGRSSSGSSCR) is disordered. The segment covering 7 to 30 (SSSGGNKPSGSGSSSGRSSSGSSC) has biased composition (low complexity). A helical transmembrane segment spans residues 40–60 (IGGWLKFFAILFALVAPIAYV).

The protein belongs to the ERG2 family.

The protein resides in the endoplasmic reticulum membrane. It participates in steroid metabolism; ergosterol biosynthesis; ergosterol from zymosterol: step 2/5. In terms of biological role, catalyzes the reaction which results in unsaturation at C-7 in the B ring of sterols. The polypeptide is C-8 sterol isomerase (erg-1) (Neurospora crassa (strain ATCC 24698 / 74-OR23-1A / CBS 708.71 / DSM 1257 / FGSC 987)).